Reading from the N-terminus, the 63-residue chain is Large ribosomal subunit protein uL29 (63 aa).

Belongs to the universal ribosomal protein uL29 family.

This Shewanella loihica (strain ATCC BAA-1088 / PV-4) protein is Large ribosomal subunit protein uL29.